Reading from the N-terminus, the 88-residue chain is Small ribosomal subunit protein uS17 (88 aa).

The protein belongs to the universal ribosomal protein uS17 family. Part of the 30S ribosomal subunit.

Its function is as follows. One of the primary rRNA binding proteins, it binds specifically to the 5'-end of 16S ribosomal RNA. This is Small ribosomal subunit protein uS17 from Pseudomonas aeruginosa (strain LESB58).